The sequence spans 905 residues: DNA mismatch repair protein MutS (905 aa).

Residues 388-410 are disordered; that stretch reads LERPANPEGTYPTDAETSGDTLP. 638–645 lines the ATP pocket; the sequence is GPNMAGKS. Positions 826 to 847 are disordered; that stretch reads RDAARGTNSAPSRQTLPGLDLP. A compositionally biased stretch (polar residues) spans 831-840; the sequence is GTNSAPSRQT.

Belongs to the DNA mismatch repair MutS family.

In terms of biological role, this protein is involved in the repair of mismatches in DNA. It is possible that it carries out the mismatch recognition step. This protein has a weak ATPase activity. The sequence is that of DNA mismatch repair protein MutS from Nitratidesulfovibrio vulgaris (strain DP4) (Desulfovibrio vulgaris).